We begin with the raw amino-acid sequence, 967 residues long: uncharacterized protein (967 aa).

Disordered stretches follow at residues 1–23 (MQNA…FHDR) and 41–72 (FTMH…DPRT). Positions 14–23 (KGRDVNFHDR) are enriched in basic and acidic residues. The segment covering 60–72 (RLSNYSSAVDPRT) has biased composition (polar residues). Residue S86 is modified to Phosphoserine. Disordered stretches follow at residues 135–259 (AVSE…QHLP), 271–296 (SVSR…SPPE), 380–399 (DSTT…APHK), 437–464 (HSYG…FVAD), and 499–544 (GTRF…KSLS). Over residues 162-187 (ESSTSNNLETGNSTNTALHNVSSPLE) the composition is skewed to polar residues. The segment covering 205–218 (HDLDEVISEKDTSL) has biased composition (basic and acidic residues). A compositionally biased stretch (basic residues) spans 221 to 234 (RSSRGRSSAPKRRK). Over residues 278 to 294 (SPASTPRSSVSSVSSSP) the composition is skewed to low complexity. Positions 382–394 (TTEYVNTESSSKT) are enriched in polar residues. Positions 499 to 508 (GTRFHSRSSH) are enriched in basic residues. Phosphoserine is present on S585. 2 disordered regions span residues 594-665 (ESNE…SVND) and 681-708 (DHRI…ESQH). A compositionally biased stretch (basic and acidic residues) spans 608-622 (YDSRESTGHTIKELR). Over residues 686-704 (ASDNQNNNNNDANALAENS) the composition is skewed to low complexity. 728–736 (PCVLDVKMG) provides a ligand contact to substrate.

Belongs to the inositol phosphokinase (IPK) family.

It is found in the cytoplasm. This is an uncharacterized protein from Schizosaccharomyces pombe (strain 972 / ATCC 24843) (Fission yeast).